The primary structure comprises 365 residues: Peptide chain release factor 2 (365 aa).

Q252 is subject to N5-methylglutamine.

This sequence belongs to the prokaryotic/mitochondrial release factor family. In terms of processing, methylated by PrmC. Methylation increases the termination efficiency of RF2.

The protein resides in the cytoplasm. In terms of biological role, peptide chain release factor 2 directs the termination of translation in response to the peptide chain termination codons UGA and UAA. The protein is Peptide chain release factor 2 (prfB) of Haemophilus influenzae (strain ATCC 51907 / DSM 11121 / KW20 / Rd).